Reading from the N-terminus, the 358-residue chain is Alanine racemase (358 aa).

The active-site Proton acceptor; specific for D-alanine is Lys-35. Lys-35 is subject to N6-(pyridoxal phosphate)lysine. Residue Arg-130 coordinates substrate. Catalysis depends on Tyr-255, which acts as the Proton acceptor; specific for L-alanine. Met-303 contacts substrate.

Belongs to the alanine racemase family. Pyridoxal 5'-phosphate is required as a cofactor.

The catalysed reaction is L-alanine = D-alanine. It functions in the pathway amino-acid biosynthesis; D-alanine biosynthesis; D-alanine from L-alanine: step 1/1. Catalyzes the interconversion of L-alanine and D-alanine. May also act on other amino acids. This is Alanine racemase (alr) from Shewanella sp. (strain MR-7).